A 475-amino-acid polypeptide reads, in one-letter code: Ankyrin repeat, SAM and basic leucine zipper domain-containing protein 1 (475 aa).

Serine 17, serine 18, and serine 20 each carry phosphoserine. ANK repeat units follow at residues 45–74, 78–107, 110–144, 148–177, 181–210, and 214–243; these read EKNE…SVES, YGWT…NASF, DKQT…DPNV, RLMT…EVNS, NGYT…NKML, and DGKT…PLEG. An SAM domain is found at 272 to 334; the sequence is SYTAFGDLEI…KILAALKELE (63 aa).

Interacts with DDX4, PIWIL1, RANBP9 and TDRD1.

The protein localises to the cytoplasm. In terms of biological role, plays a central role during spermatogenesis by repressing transposable elements and preventing their mobilization, which is essential for the germline integrity. Acts via the piRNA metabolic process, which mediates the repression of transposable elements during meiosis by forming complexes composed of piRNAs and Piwi proteins and governs the methylation and subsequent repression of transposons. Its association with pi-bodies suggests a participation in the primary piRNAs metabolic process. Required prior to the pachytene stage to facilitate the production of multiple types of piRNAs, including those associated with repeats involved in the regulation of retrotransposons. May act by mediating protein-protein interactions during germ cell maturation. This Mustela putorius furo (European domestic ferret) protein is Ankyrin repeat, SAM and basic leucine zipper domain-containing protein 1 (ASZ1).